The following is a 177-amino-acid chain: MTPISVILVTDNKLTRPKTMSTTREKLLRTTSRFVSTFGSFDIEEILSIRTPTCLYHQCCPSFNKNVVTNEETRANFPQFIATFKRFDFSIIEPDHTLVDEAARRVMIRAKASAESIVGAYENEYIFILKMTDDCRFIEEIYEFYDTIRLKDLQYRLEAKHISYGDAAPFKTRDTQL.

This sequence belongs to the trt14 isomerase family. As to quaternary structure, homodimer.

It functions in the pathway secondary metabolite biosynthesis; terpenoid biosynthesis. In terms of biological role, part of the gene cluster B that mediates the biosynthesis of austinol and dehydroaustinol, two fungal meroterpenoids. The first step of the pathway is the synthesis of 3,5-dimethylorsellinic acid by the polyketide synthase ausA. 3,5-dimethylorsellinic acid is then prenylated by the polyprenyl transferase ausN. Further epoxidation by the FAD-dependent monooxygenase ausM and cyclization by the probable terpene cyclase ausL lead to the formation of protoaustinoid A. Protoaustinoid A is then oxidized to spiro-lactone preaustinoid A3 by the combined action of the FAD-binding monooxygenases ausB and ausC, and the dioxygenase ausE. Acid-catalyzed keto-rearrangement and ring contraction of the tetraketide portion of preaustinoid A3 by ausJ lead to the formation of preaustinoid A4. The aldo-keto reductase ausK, with the help of ausH, is involved in the next step by transforming preaustinoid A4 into isoaustinone which is in turn hydroxylated by the P450 monooxygenase ausI to form austinolide. Finally, the cytochrome P450 monooxygenase ausG modifies austinolide to austinol. Austinol can be further modified to dehydroaustinol which forms a diffusible complex with diorcinol that initiates conidiation. Due to genetic rearrangements of the clusters and the subsequent loss of some enzymes, the end products of the Emericella nidulans austinoid biosynthesis clusters are austinol and dehydroaustinol, even if additional enzymes, such as the O-acetyltransferase ausQ and the cytochrome P450 monooxygenase ausR are still functional. This chain is Austinoid biosynthesis clusters protein F, found in Emericella nidulans (strain FGSC A4 / ATCC 38163 / CBS 112.46 / NRRL 194 / M139) (Aspergillus nidulans).